A 333-amino-acid chain; its full sequence is Transcription factor HHO6 (333 aa).

Residues 189–249 form the HTH myb-type domain; it reads ALRKQRRCWN…HLQKYRLHIR (61 aa). The H-T-H motif DNA-binding region spans 220-245; sequence PKQIREHMQEEGLTNDEVKSHLQKYR. Residues 274 to 333 form a disordered region; that stretch reads DEEETCEGGESLKRSNAQSDSPQGPLQLPSTTTTTGGDSSMEDVEDAKSESFQLERLRSP. Residues 287-303 are compositionally biased toward polar residues; it reads RSNAQSDSPQGPLQLPS. The segment covering 319 to 333 has biased composition (basic and acidic residues); the sequence is DAKSESFQLERLRSP.

The protein resides in the nucleus. Functionally, probable transcription factor involved in phosphate signaling in roots. The chain is Transcription factor HHO6 from Arabidopsis thaliana (Mouse-ear cress).